Consider the following 499-residue polypeptide: Anaerobic nitric oxide reductase flavorubredoxin (499 aa).

Residues threonine 30–isoleucine 210 are zinc metallo-hydrolase. Fe cation-binding residues include histidine 79, glutamate 81, aspartate 83, histidine 147, aspartate 166, and histidine 227. Residues isoleucine 254 to alanine 393 enclose the Flavodoxin-like domain. Residues serine 260 to asparagine 264 and alanine 342 to valine 369 contribute to the FMN site. The 52-residue stretch at lysine 447–valine 498 folds into the Rubredoxin-like domain. 4 residues coordinate Fe cation: cysteine 452, cysteine 455, cysteine 485, and cysteine 488.

In the N-terminal section; belongs to the zinc metallo-hydrolase group 3 family. As to quaternary structure, homotetramer. It depends on Fe cation as a cofactor. The cofactor is FMN.

Its subcellular location is the cytoplasm. The protein operates within nitrogen metabolism; nitric oxide reduction. Anaerobic nitric oxide reductase; uses NADH to detoxify nitric oxide (NO), protecting several 4Fe-4S NO-sensitive enzymes. Has at least 2 reductase partners, only one of which (NorW, flavorubredoxin reductase) has been identified. NO probably binds to the di-iron center; electrons enter from the NorW at rubredoxin and are transferred sequentially to the FMN center and the di-iron center. Also able to function as an aerobic oxygen reductase. The polypeptide is Anaerobic nitric oxide reductase flavorubredoxin (Aliivibrio salmonicida (strain LFI1238) (Vibrio salmonicida (strain LFI1238))).